We begin with the raw amino-acid sequence, 539 residues long: Probable glycerol kinase (539 aa).

Position 12 (T12) interacts with substrate. ATP is bound at residue R16. Residues R86, Y168, and D285 each contribute to the substrate site. ATP is bound by residues T307, G352, and 453-457; that span reads GMAKN.

This sequence belongs to the FGGY kinase family.

The catalysed reaction is glycerol + ATP = sn-glycerol 3-phosphate + ADP + H(+). It functions in the pathway polyol metabolism; glycerol degradation via glycerol kinase pathway; sn-glycerol 3-phosphate from glycerol: step 1/1. In Dictyostelium discoideum (Social amoeba), this protein is Probable glycerol kinase (gk).